The primary structure comprises 303 residues: 2-phospho-L-lactate transferase (303 aa).

Positions 48 and 87 each coordinate 7,8-didemethyl-8-hydroxy-5-deazariboflavin.

It belongs to the CofD family. As to quaternary structure, homodimer. Requires Mg(2+) as cofactor.

The enzyme catalyses (2S)-lactyl-2-diphospho-5'-guanosine + 7,8-didemethyl-8-hydroxy-5-deazariboflavin = oxidized coenzyme F420-0 + GMP + H(+). Its pathway is cofactor biosynthesis; coenzyme F420 biosynthesis. Functionally, catalyzes the transfer of the 2-phospholactate moiety from (2S)-lactyl-2-diphospho-5'-guanosine to 7,8-didemethyl-8-hydroxy-5-deazariboflavin (FO) with the formation of oxidized coenzyme F420-0 and GMP. The sequence is that of 2-phospho-L-lactate transferase from Methanosarcina mazei (strain ATCC BAA-159 / DSM 3647 / Goe1 / Go1 / JCM 11833 / OCM 88) (Methanosarcina frisia).